The primary structure comprises 227 residues: Prolactin (227 aa).

Positions 1–28 (MNIKGSPWKGSLLLLLVSNLLLCQNVAP) are cleaved as a signal peptide. A disulfide bridge links Cys32 with Cys39. The residue at position 54 (Ser54) is a Phosphoserine. Residue Asn59 is glycosylated (N-linked (GlcNAc...) asparagine). Phosphoserine occurs at positions 62 and 118. Intrachain disulfides connect Cys86/Cys202 and Cys219/Cys227.

It belongs to the somatotropin/prolactin family. In terms of assembly, interacts with PRLR.

The protein localises to the secreted. Functionally, prolactin acts primarily on the mammary gland by promoting lactation. This is Prolactin (PRL) from Macaca mulatta (Rhesus macaque).